Here is a 253-residue protein sequence, read N- to C-terminus: UPF0246 protein Swit_4565 (253 aa).

This sequence belongs to the UPF0246 family.

This chain is UPF0246 protein Swit_4565, found in Rhizorhabdus wittichii (strain DSM 6014 / CCUG 31198 / JCM 15750 / NBRC 105917 / EY 4224 / RW1) (Sphingomonas wittichii).